The chain runs to 151 residues: Late embryogenesis abundant protein Lea14-A (151 aa).

This sequence belongs to the LEA type 2 family.

The chain is Late embryogenesis abundant protein Lea14-A (LEA14-A) from Gossypium hirsutum (Upland cotton).